Here is a 50-residue protein sequence, read N- to C-terminus: Large ribosomal subunit protein bL33B (50 aa).

It belongs to the bacterial ribosomal protein bL33 family.

This Streptococcus agalactiae serotype V (strain ATCC BAA-611 / 2603 V/R) protein is Large ribosomal subunit protein bL33B.